The primary structure comprises 491 residues: Probable glycine dehydrogenase (decarboxylating) subunit 2 (491 aa).

Lys264 carries the N6-(pyridoxal phosphate)lysine modification.

Belongs to the GcvP family. C-terminal subunit subfamily. As to quaternary structure, the glycine cleavage system is composed of four proteins: P, T, L and H. In this organism, the P 'protein' is a heterodimer of two subunits. Requires pyridoxal 5'-phosphate as cofactor.

The catalysed reaction is N(6)-[(R)-lipoyl]-L-lysyl-[glycine-cleavage complex H protein] + glycine + H(+) = N(6)-[(R)-S(8)-aminomethyldihydrolipoyl]-L-lysyl-[glycine-cleavage complex H protein] + CO2. Its function is as follows. The glycine cleavage system catalyzes the degradation of glycine. The P protein binds the alpha-amino group of glycine through its pyridoxal phosphate cofactor; CO(2) is released and the remaining methylamine moiety is then transferred to the lipoamide cofactor of the H protein. The chain is Probable glycine dehydrogenase (decarboxylating) subunit 2 from Coxiella burnetii (strain CbuG_Q212) (Coxiella burnetii (strain Q212)).